Here is a 430-residue protein sequence, read N- to C-terminus: Enolase (430 aa).

Q163 contacts (2R)-2-phosphoglycerate. The Proton donor role is filled by E205. The Mg(2+) site is built by D242, E287, and D314. (2R)-2-phosphoglycerate-binding residues include K339, R368, S369, and K390. K339 (proton acceptor) is an active-site residue.

The protein belongs to the enolase family. It depends on Mg(2+) as a cofactor.

The protein resides in the cytoplasm. The protein localises to the secreted. Its subcellular location is the cell surface. The enzyme catalyses (2R)-2-phosphoglycerate = phosphoenolpyruvate + H2O. Its pathway is carbohydrate degradation; glycolysis; pyruvate from D-glyceraldehyde 3-phosphate: step 4/5. Functionally, catalyzes the reversible conversion of 2-phosphoglycerate (2-PG) into phosphoenolpyruvate (PEP). It is essential for the degradation of carbohydrates via glycolysis. In Bacillus pumilus (strain SAFR-032), this protein is Enolase.